Reading from the N-terminus, the 228-residue chain is LexA repressor (228 aa).

The segment at residues 26–46 is a DNA-binding region (H-T-H motif); the sequence is FDEMKDALDLRSKSGIHRLIT. Catalysis depends on for autocatalytic cleavage activity residues S149 and K187.

It belongs to the peptidase S24 family. In terms of assembly, homodimer.

It carries out the reaction Hydrolysis of Ala-|-Gly bond in repressor LexA.. Its function is as follows. Represses a number of genes involved in the response to DNA damage (SOS response), including recA and lexA. Has been shown to bind to the direct repeat sequence 5'-GTT-N(7)-GTTC-3'. In the presence of single-stranded DNA, RecA interacts with LexA causing an autocatalytic cleavage which disrupts the DNA-binding part of LexA, leading to derepression of the SOS regulon and eventually DNA repair. This is LexA repressor from Cereibacter sphaeroides (strain ATCC 17023 / DSM 158 / JCM 6121 / CCUG 31486 / LMG 2827 / NBRC 12203 / NCIMB 8253 / ATH 2.4.1.) (Rhodobacter sphaeroides).